Here is a 148-residue protein sequence, read N- to C-terminus: Transcriptional regulator MraZ (148 aa).

SpoVT-AbrB domains follow at residues 5-51 and 80-123; these read VSIL…PEPN and AETL…NAEE.

This sequence belongs to the MraZ family. In terms of assembly, forms oligomers.

Its subcellular location is the cytoplasm. It is found in the nucleoid. The polypeptide is Transcriptional regulator MraZ (Chromobacterium violaceum (strain ATCC 12472 / DSM 30191 / JCM 1249 / CCUG 213 / NBRC 12614 / NCIMB 9131 / NCTC 9757 / MK)).